A 199-amino-acid polypeptide reads, in one-letter code: Recombination protein RecR (199 aa).

The C4-type zinc finger occupies 58 to 73 (CSVCNNITDVDPCVFC). Positions 81–176 (RLVCVVEEPT…RLTRIATGVP (96 aa)) constitute a Toprim domain.

The protein belongs to the RecR family.

Its function is as follows. May play a role in DNA repair. It seems to be involved in an RecBC-independent recombinational process of DNA repair. It may act with RecF and RecO. The polypeptide is Recombination protein RecR (Acidobacterium capsulatum (strain ATCC 51196 / DSM 11244 / BCRC 80197 / JCM 7670 / NBRC 15755 / NCIMB 13165 / 161)).